A 68-amino-acid polypeptide reads, in one-letter code: Alpha-conotoxin PIVA (68 aa).

Residues 1 to 16 (MFTVFLLVVLATTVVS) form the signal peptide. Positions 17 to 41 (FTSDRASDDRNTNDKASRLLSHVVR) are excised as a propeptide. Disulfide bonds link C43–C57, C44–C52, and C55–C64. P48 and P54 each carry 4-hydroxyproline; partial. At P61 the chain carries 4-hydroxyproline. Residue Q66 is modified to Glutamine amide.

Belongs to the conotoxin A superfamily. As to expression, expressed by the venom duct.

The protein resides in the secreted. Its function is as follows. Alpha-conotoxins act on postsynaptic membranes, they bind to the nicotinic acetylcholine receptors (nAChR) and thus inhibit them. This toxin has higher affinity for the adult subtype (alpha-1-beta-1-gamma-delta (CHRNA1-CHRNB1-CHRNG-CHRND) subunits) (IC(50)=2.3 nM) of the receptor than for the fetal subtype (alpha-1-beta-1-epsilon-delta (CHRNA1-CHRNB1-CHRND-CHRNE) subunits) (IC(50)=22 nM). In Conus purpurascens (Purple cone), this protein is Alpha-conotoxin PIVA.